The following is a 654-amino-acid chain: tRNA 5-methylaminomethyl-2-thiouridine biosynthesis bifunctional protein MnmC (654 aa).

Positions M1–Q235 are tRNA (mnm(5)s(2)U34)-methyltransferase. The FAD-dependent cmnm(5)s(2)U34 oxidoreductase stretch occupies residues V261–G654.

It in the N-terminal section; belongs to the methyltransferase superfamily. tRNA (mnm(5)s(2)U34)-methyltransferase family. This sequence in the C-terminal section; belongs to the DAO family. FAD is required as a cofactor.

It localises to the cytoplasm. It catalyses the reaction 5-aminomethyl-2-thiouridine(34) in tRNA + S-adenosyl-L-methionine = 5-methylaminomethyl-2-thiouridine(34) in tRNA + S-adenosyl-L-homocysteine + H(+). Functionally, catalyzes the last two steps in the biosynthesis of 5-methylaminomethyl-2-thiouridine (mnm(5)s(2)U) at the wobble position (U34) in tRNA. Catalyzes the FAD-dependent demodification of cmnm(5)s(2)U34 to nm(5)s(2)U34, followed by the transfer of a methyl group from S-adenosyl-L-methionine to nm(5)s(2)U34, to form mnm(5)s(2)U34. The sequence is that of tRNA 5-methylaminomethyl-2-thiouridine biosynthesis bifunctional protein MnmC from Pseudomonas aeruginosa (strain ATCC 15692 / DSM 22644 / CIP 104116 / JCM 14847 / LMG 12228 / 1C / PRS 101 / PAO1).